The sequence spans 145 residues: Peptidyl-lysine N-acetyltransferase YjaB (145 aa).

Residues 3 to 144 (INIRRSRHEE…KPYPLLNLIY (142 aa)) form the N-acetyltransferase domain.

It belongs to the acetyltransferase family.

The catalysed reaction is L-lysyl-[protein] + acetyl-CoA = N(6)-acetyl-L-lysyl-[protein] + CoA + H(+). Its function is as follows. N-epsilon-lysine acetyltransferase that catalyzes acetylation of a large number of proteins. This is Peptidyl-lysine N-acetyltransferase YjaB (yjaB) from Salmonella typhimurium (strain LT2 / SGSC1412 / ATCC 700720).